The sequence spans 153 residues: Putative tRNA (cytidine(34)-2'-O)-methyltransferase (153 aa).

S-adenosyl-L-methionine contacts are provided by Gly-102, Ile-122, and Ser-131.

The protein belongs to the class IV-like SAM-binding methyltransferase superfamily. RNA methyltransferase TrmH family. TrmL subfamily.

The protein resides in the cytoplasm. The enzyme catalyses cytidine(34) in tRNA + S-adenosyl-L-methionine = 2'-O-methylcytidine(34) in tRNA + S-adenosyl-L-homocysteine + H(+). It carries out the reaction 5-carboxymethylaminomethyluridine(34) in tRNA(Leu) + S-adenosyl-L-methionine = 5-carboxymethylaminomethyl-2'-O-methyluridine(34) in tRNA(Leu) + S-adenosyl-L-homocysteine + H(+). Functionally, could methylate the ribose at the nucleotide 34 wobble position in tRNA. The chain is Putative tRNA (cytidine(34)-2'-O)-methyltransferase from Synechocystis sp. (strain ATCC 27184 / PCC 6803 / Kazusa).